We begin with the raw amino-acid sequence, 550 residues long: Natural resistance-associated macrophage protein 1 (550 aa).

The segment at 1 to 45 is disordered; it reads MTGDKGPQRLSGSSYGSISSPTSPTSPGPQQAPPRETYLSEKIPI. Residues 1-58 are Cytoplasmic-facing; it reads MTGDKGPQRLSGSSYGSISSPTSPTSPGPQQAPPRETYLSEKIPIPDTKPGTFSLRKL. The span at 11–23 shows a compositional bias: low complexity; the sequence is SGSSYGSISSPTS. A helical membrane pass occupies residues 59–76; that stretch reads WAFTGPGFLMSIAFLDPG. Residues 77–85 are Extracellular-facing; that stretch reads NIESDLQAG. A helical transmembrane segment spans residues 86-105; the sequence is AVAGFKLLWVLLWATVLGLL. Residues 106 to 142 are Cytoplasmic-facing; the sequence is CQRLAARLGVVTGKDLGEVCHLYYPKVPRTVLWLTIE. Residues 143–163 form a helical membrane-spanning segment; the sequence is LAIVGSDMQEVIGTAIAFNLL. Over 164-167 the chain is Extracellular; the sequence is SAGR. A helical membrane pass occupies residues 168 to 187; it reads IPLWGGVLITIVDTFFFLFL. Residues 188 to 196 are Cytoplasmic-facing; it reads DNYGLRKLE. A helical membrane pass occupies residues 197-217; the sequence is AFFGLLITIMALTFGYEYVVA. Residues 218-240 lie on the Extracellular side of the membrane; the sequence is RPEQGALLRGLFLPSCPGCGHPE. Residues 241-259 traverse the membrane as a helical segment; that stretch reads LLQAVGIVGAIIMPHNIYL. Residues 260–287 lie on the Cytoplasmic side of the membrane; sequence HSALVKSREIDRARRADIREANMYFLIE. Residues 288–307 traverse the membrane as a helical segment; the sequence is ATIALSVSFIINLFVMAVFG. The Extracellular portion of the chain corresponds to 308-349; it reads QAFYQKTNQAAFNICANSSLHDYAKIFPMNNATVAVDIYQGG. N324 and N338 each carry an N-linked (GlcNAc...) asparagine glycan. Residues 350–369 traverse the membrane as a helical segment; that stretch reads VILGCLFGPAALYIWAIGLL. Residues 370-400 lie on the Cytoplasmic side of the membrane; that stretch reads AAGQSSTMTGTYAGQFVMEGFLRLRWSRFAR. A helical transmembrane segment spans residues 401 to 418; the sequence is VLLTRSCAILPTVLVAVF. At 419-429 the chain is on the extracellular side; the sequence is RDLRDLSGLND. Residues 430–450 form a helical membrane-spanning segment; it reads LLNVLQSLLLPFAVLPILTFT. Residues 451 to 466 are Cytoplasmic-facing; sequence SMPTLMQEFANGLLNK. A helical transmembrane segment spans residues 467–488; the sequence is VVTSSIMVLVCAINLYFVVSYL. Residues 489–496 lie on the Extracellular side of the membrane; that stretch reads PSLPHPAY. Residues 497 to 516 form a helical membrane-spanning segment; that stretch reads FGLAALLAAAYLGLSTYLVW. At 517-550 the chain is on the cytoplasmic side; the sequence is TCCLAHGATFLAHSSHHHFLYGLLEEDQKGETSG.

The protein belongs to the NRAMP family. Macrophages; peripheral blood leukocytes, lung, spleen and liver.

It localises to the late endosome membrane. The protein localises to the lysosome membrane. It carries out the reaction Zn(2+)(in) + H(+)(out) = Zn(2+)(out) + H(+)(in). The enzyme catalyses Fe(2+)(in) + H(+)(out) = Fe(2+)(out) + H(+)(in). The catalysed reaction is Mn(2+)(in) + H(+)(out) = Mn(2+)(out) + H(+)(in). Macrophage-specific antiporter that fluxes metal ions in either direction against a proton gradient. Localized to late endosomal lysosomal membranes, delivers bivalent cations from the cytosol into these acidic compartments where they may directly affect antimicrobial activity. Involved in iron metabolism and host natural resistance to infection with intracellular parasites. Pathogen resistance involves sequestration of Fe(2+) and Mn(2+), cofactors of both prokaryotic and eukaryotic catalases and superoxide dismutases, not only to protect the macrophage against its own generation of reactive oxygen species, but to deny the cations to the pathogen for synthesis of its protective enzymes. The protein is Natural resistance-associated macrophage protein 1 of Homo sapiens (Human).